Consider the following 68-residue polypeptide: uncharacterized protein (68 aa).

This is an uncharacterized protein from Archaeoglobus fulgidus (strain ATCC 49558 / DSM 4304 / JCM 9628 / NBRC 100126 / VC-16).